A 317-amino-acid polypeptide reads, in one-letter code: Glutaminase (317 aa).

Substrate-binding residues include Ser67, Asn118, Glu162, Asn169, Tyr193, Tyr245, and Val263.

It belongs to the glutaminase family. In terms of assembly, homotetramer.

The catalysed reaction is L-glutamine + H2O = L-glutamate + NH4(+). The chain is Glutaminase from Brucella abortus (strain S19).